Here is a 493-residue protein sequence, read N- to C-terminus: Probable cytosol aminopeptidase (493 aa).

Mn(2+) is bound by residues K262 and D267. K274 is an active-site residue. Positions 285, 344, and 346 each coordinate Mn(2+). The active site involves R348.

This sequence belongs to the peptidase M17 family. Mn(2+) is required as a cofactor.

The protein localises to the cytoplasm. It carries out the reaction Release of an N-terminal amino acid, Xaa-|-Yaa-, in which Xaa is preferably Leu, but may be other amino acids including Pro although not Arg or Lys, and Yaa may be Pro. Amino acid amides and methyl esters are also readily hydrolyzed, but rates on arylamides are exceedingly low.. The enzyme catalyses Release of an N-terminal amino acid, preferentially leucine, but not glutamic or aspartic acids.. Functionally, presumably involved in the processing and regular turnover of intracellular proteins. Catalyzes the removal of unsubstituted N-terminal amino acids from various peptides. This Xanthomonas campestris pv. campestris (strain 8004) protein is Probable cytosol aminopeptidase.